The primary structure comprises 54 residues: Large ribosomal subunit protein bL33B (54 aa).

This sequence belongs to the bacterial ribosomal protein bL33 family.

The sequence is that of Large ribosomal subunit protein bL33B from Myxococcus xanthus (strain DK1622).